Reading from the N-terminus, the 125-residue chain is Neuraminyllactose-binding hemagglutinin (125 aa).

The N-acetyl-neuraminyl-alpha(2,3)-lactose binding motif stretch occupies residues 92–97; that stretch reads KRTIQK.

It is found in the cell outer membrane. The sequence is that of Neuraminyllactose-binding hemagglutinin (hpaA) from Helicobacter pylori (Campylobacter pylori).